The sequence spans 110 residues: Large ribosomal subunit protein uL24 (110 aa).

This sequence belongs to the universal ribosomal protein uL24 family. Part of the 50S ribosomal subunit.

Functionally, one of two assembly initiator proteins, it binds directly to the 5'-end of the 23S rRNA, where it nucleates assembly of the 50S subunit. In terms of biological role, one of the proteins that surrounds the polypeptide exit tunnel on the outside of the subunit. This chain is Large ribosomal subunit protein uL24, found in Chloroflexus aggregans (strain MD-66 / DSM 9485).